A 146-amino-acid polypeptide reads, in one-letter code: Putative type II restriction enzyme MjaORF1200P (146 aa).

The protein to A.pernix APE2001.

It carries out the reaction Endonucleolytic cleavage of DNA to give specific double-stranded fragments with terminal 5'-phosphates.. Functionally, a putative type II restriction enzyme, its methylase would be M.MjaORF1200P (AC Q58600). The sequence is that of Putative type II restriction enzyme MjaORF1200P from Methanocaldococcus jannaschii (strain ATCC 43067 / DSM 2661 / JAL-1 / JCM 10045 / NBRC 100440) (Methanococcus jannaschii).